Here is a 101-residue protein sequence, read N- to C-terminus: Movement protein (101 aa).

The tract at residues 1–22 (MDPQNSFLLQPRVPTAAPTSGG) is disordered. The chain crosses the membrane as a helical span at residues 30 to 50 (EVAILSFVGLICFYLLYLWVL). Residues 79–101 (NPIPNTQAPPSQGNPGPFVPGTG) form a disordered region. Over residues 80 to 92 (PIPNTQAPPSQGN) the composition is skewed to polar residues.

It belongs to the mastrevirus movement protein family. As to quaternary structure, interacts with the capsid protein (CP). Part of a MP-CP-viral DNA complex.

It is found in the host membrane. In terms of biological role, involved in the viral transport within, and between cells. The polypeptide is Movement protein (Avena sativa (Oat)).